We begin with the raw amino-acid sequence, 640 residues long: Probable potassium transport system protein Kup (640 aa).

A run of 12 helical transmembrane segments spans residues 26 to 46 (IAGL…TSPL), 69 to 89 (ILSL…VLFI), 117 to 137 (AWVL…DGMI), 155 to 175 (PAFR…LFVI), 186 to 206 (IFGP…IAGI), 224 to 244 (FFAD…LAIT), 265 to 285 (WFLV…ALIL), 297 to 317 (LLVP…ATII), 355 to 375 (IYVP…VVGF), 384 to 404 (AYGI…FVVV), 415 to 435 (AGLF…ATTV), and 437 to 457 (ILAG…LLTT).

The protein belongs to the HAK/KUP transporter (TC 2.A.72) family.

Its subcellular location is the cell inner membrane. It carries out the reaction K(+)(in) + H(+)(in) = K(+)(out) + H(+)(out). Its function is as follows. Transport of potassium into the cell. Likely operates as a K(+):H(+) symporter. The sequence is that of Probable potassium transport system protein Kup from Aromatoleum aromaticum (strain DSM 19018 / LMG 30748 / EbN1) (Azoarcus sp. (strain EbN1)).